The following is a 499-amino-acid chain: Glutamate--tRNA ligase (499 aa).

The 'HIGH' region motif lies at 12–22 (PSPTGHLHIGN). Residues 259–263 (KLSKR) carry the 'KMSKS' region motif. An ATP-binding site is contributed by Lys262.

Belongs to the class-I aminoacyl-tRNA synthetase family. Glutamate--tRNA ligase type 1 subfamily. As to quaternary structure, monomer.

It is found in the cytoplasm. It catalyses the reaction tRNA(Glu) + L-glutamate + ATP = L-glutamyl-tRNA(Glu) + AMP + diphosphate. Catalyzes the attachment of glutamate to tRNA(Glu) in a two-step reaction: glutamate is first activated by ATP to form Glu-AMP and then transferred to the acceptor end of tRNA(Glu). The polypeptide is Glutamate--tRNA ligase (Lactobacillus johnsonii (strain CNCM I-12250 / La1 / NCC 533)).